Here is a 691-residue protein sequence, read N- to C-terminus: Protein 4.2 (691 aa).

Residue glycine 2 is the site of N-myristoyl glycine attachment. The segment at 31 to 39 is band 3 binding; the sequence is LTLRRGQSF. At serine 248 the chain carries Phosphoserine. Phosphotyrosine is present on tyrosine 570.

The protein belongs to the transglutaminase superfamily. Transglutaminase family. Component of the ankyrin-1 complex in the erythrocyte, composed of ANK1, RHCE, RHAG, SLC4A1, EPB42, GYPA, GYPB and AQP1. Interacts with SLC4A1 (via the cytoplasmic domain); this interaction is mediated by the SLC4A1 Band 3-I dimer. Interacts with ANK1 (via ANK 1-13 repeats). Interacts with AQP1 (via the C-terminal).

The protein resides in the cell membrane. It localises to the cytoplasm. It is found in the cytoskeleton. Its function is as follows. Component of the ankyrin-1 complex, a multiprotein complex involved in the stability and shape of the erythrocyte membrane. In Mus musculus (Mouse), this protein is Protein 4.2.